The following is a 244-amino-acid chain: Ureidoacrylate amidohydrolase RutB (244 aa).

Asp-38 functions as the Proton acceptor in the catalytic mechanism. Lys-147 is an active-site residue. Catalysis depends on Cys-180, which acts as the Nucleophile.

This sequence belongs to the isochorismatase family. RutB subfamily.

It catalyses the reaction (Z)-3-ureidoacrylate + H2O + H(+) = (Z)-3-aminoacrylate + NH4(+) + CO2. The catalysed reaction is (Z)-3-ureidoacrylate + H2O = (Z)-3-aminoacrylate + carbamate + H(+). The enzyme catalyses (Z)-2-methylureidoacrylate + H2O + H(+) = (Z)-2-methylaminoacrylate + NH4(+) + CO2. Its function is as follows. Hydrolyzes ureidoacrylate to form aminoacrylate and carbamate. The carbamate hydrolyzes spontaneously, thereby releasing one of the nitrogen atoms of the pyrimidine ring as ammonia and one of its carbon atoms as CO2. This chain is Ureidoacrylate amidohydrolase RutB, found in Escherichia coli O55:H7 (strain CB9615 / EPEC).